The primary structure comprises 512 residues: Maturase K (512 aa).

It belongs to the intron maturase 2 family. MatK subfamily.

Its subcellular location is the plastid. It is found in the chloroplast. Its function is as follows. Usually encoded in the trnK tRNA gene intron. Probably assists in splicing its own and other chloroplast group II introns. The protein is Maturase K of Lemna gibba (Swollen duckweed).